A 340-amino-acid chain; its full sequence is Ferrochelatase (340 aa).

The Fe cation site is built by His189 and Glu292.

It belongs to the ferrochelatase family.

Its subcellular location is the cytoplasm. The catalysed reaction is heme b + 2 H(+) = protoporphyrin IX + Fe(2+). It functions in the pathway porphyrin-containing compound metabolism; protoheme biosynthesis; protoheme from protoporphyrin-IX: step 1/1. In terms of biological role, catalyzes the ferrous insertion into protoporphyrin IX. This chain is Ferrochelatase, found in Pseudomonas fluorescens (strain ATCC BAA-477 / NRRL B-23932 / Pf-5).